Reading from the N-terminus, the 253-residue chain is 3-dehydroquinate dehydratase (253 aa).

3-dehydroquinate contacts are provided by residues 46-48 (EFR) and arginine 82. Residue histidine 143 is the Proton donor/acceptor of the active site. Lysine 170 acts as the Schiff-base intermediate with substrate in catalysis. Residues arginine 213, serine 232, and glutamine 236 each contribute to the 3-dehydroquinate site.

Belongs to the type-I 3-dehydroquinase family. In terms of assembly, homodimer.

It catalyses the reaction 3-dehydroquinate = 3-dehydroshikimate + H2O. It participates in metabolic intermediate biosynthesis; chorismate biosynthesis; chorismate from D-erythrose 4-phosphate and phosphoenolpyruvate: step 3/7. Involved in the third step of the chorismate pathway, which leads to the biosynthesis of aromatic amino acids. Catalyzes the cis-dehydration of 3-dehydroquinate (DHQ) and introduces the first double bond of the aromatic ring to yield 3-dehydroshikimate. In Clostridium novyi (strain NT), this protein is 3-dehydroquinate dehydratase.